Reading from the N-terminus, the 427-residue chain is MSGWQETAEKLEMSWSNDVRWQGVERPYSGEEVVKLRGSLKIEYTLAKTGAEKLWKLLHEEDYVNALGAMTGGQAIQQVKAGLKAIYLSGWQVAADANLAGHMYPDQSLYPANSVPSVVKRINQALQRADQIQHLEGEGEVDYFAPIVADAEAGFGGQLNVFELMKAMIEAGASGVHFEDQLASEKKCGHLGGKVLIPTQTAIRNLVSARLAADVMGVPTILVARTDADAADLITSDIDPADQRFITGERTPEGFYRTNAGIEQAIARGLAYAPYADLIWCETSKPSLEEAKQFADAIHEKFPGKLLAYNCSPSFNWEANLDRATIETFQQELGKMGYKFQFVTLAGFHALNHSMFELAYGYKQRGMGAYSELQQAEFASEVKGYTATRHQREVGTGYFDQVAQTITGGTSSTTALTGSTEEAQFQK.

Position 89-91 (89-91 (SGW)) interacts with substrate. D150 is a binding site for Mg(2+). C188 (proton acceptor) is an active-site residue. Residues 189–190 (GH), R225, 310–314 (NCSPS), and T344 each bind substrate.

The protein belongs to the isocitrate lyase/PEP mutase superfamily. Isocitrate lyase family. In terms of assembly, homotetramer. The cofactor is Mg(2+).

It catalyses the reaction D-threo-isocitrate = glyoxylate + succinate. It functions in the pathway carbohydrate metabolism; glyoxylate cycle; (S)-malate from isocitrate: step 1/2. Its function is as follows. Involved in the metabolic adaptation in response to environmental changes. Catalyzes the reversible formation of succinate and glyoxylate from isocitrate, a key step of the glyoxylate cycle, which operates as an anaplerotic route for replenishing the tricarboxylic acid cycle during growth on fatty acid substrates. The polypeptide is Isocitrate lyase (aceA) (Halalkalibacterium halodurans (strain ATCC BAA-125 / DSM 18197 / FERM 7344 / JCM 9153 / C-125) (Bacillus halodurans)).